The following is a 100-amino-acid chain: A-type ATP synthase subunit F (100 aa).

The protein belongs to the V-ATPase F subunit family. Has multiple subunits with at least A(3), B(3), C, D, E, F, H, I and proteolipid K(x).

It localises to the cell membrane. In terms of biological role, component of the A-type ATP synthase that produces ATP from ADP in the presence of a proton gradient across the membrane. This Methanocorpusculum labreanum (strain ATCC 43576 / DSM 4855 / Z) protein is A-type ATP synthase subunit F.